Consider the following 81-residue polypeptide: Sulfur carrier protein TusA (81 aa).

The Cysteine persulfide intermediate role is filled by cysteine 19.

Belongs to the sulfur carrier protein TusA family. Interacts with IscS.

The protein resides in the cytoplasm. It functions in the pathway tRNA modification. Functionally, sulfur carrier protein involved in sulfur trafficking in the cell. Part of a sulfur-relay system required for 2-thiolation during synthesis of 2-thiouridine of the modified wobble base 5-methylaminomethyl-2-thiouridine (mnm(5)s(2)U) in tRNA. Interacts with IscS and stimulates its cysteine desulfurase activity. Accepts an activated sulfur from IscS, which is then transferred to TusD, and thus determines the direction of sulfur flow from IscS to 2-thiouridine formation. Also appears to be involved in sulfur transfer for the biosynthesis of molybdopterin. The polypeptide is Sulfur carrier protein TusA (Shigella boydii serotype 18 (strain CDC 3083-94 / BS512)).